Reading from the N-terminus, the 210-residue chain is Ion-translocating oxidoreductase complex subunit G (210 aa).

Residues 9-29 (SLVLALFAIAATALVTITYAL) form a helical membrane-spanning segment. Residue Thr176 is modified to FMN phosphoryl threonine.

This sequence belongs to the RnfG family. The complex is composed of six subunits: RnfA, RnfB, RnfC, RnfD, RnfE and RnfG. Requires FMN as cofactor.

It is found in the cell inner membrane. Functionally, part of a membrane-bound complex that couples electron transfer with translocation of ions across the membrane. The chain is Ion-translocating oxidoreductase complex subunit G from Aliivibrio fischeri (strain ATCC 700601 / ES114) (Vibrio fischeri).